A 356-amino-acid polypeptide reads, in one-letter code: Peptide chain release factor 1 (356 aa).

At glutamine 232 the chain carries N5-methylglutamine.

This sequence belongs to the prokaryotic/mitochondrial release factor family. Methylated by PrmC. Methylation increases the termination efficiency of RF1.

It localises to the cytoplasm. Its function is as follows. Peptide chain release factor 1 directs the termination of translation in response to the peptide chain termination codons UAG and UAA. The chain is Peptide chain release factor 1 from Thermoanaerobacter pseudethanolicus (strain ATCC 33223 / 39E) (Clostridium thermohydrosulfuricum).